The sequence spans 75 residues: Small ribosomal subunit protein bS18 (75 aa).

It belongs to the bacterial ribosomal protein bS18 family. In terms of assembly, part of the 30S ribosomal subunit. Forms a tight heterodimer with protein bS6.

Functionally, binds as a heterodimer with protein bS6 to the central domain of the 16S rRNA, where it helps stabilize the platform of the 30S subunit. This Roseobacter denitrificans (strain ATCC 33942 / OCh 114) (Erythrobacter sp. (strain OCh 114)) protein is Small ribosomal subunit protein bS18.